The sequence spans 520 residues: Type I restriction enzyme EcoprrI methylase subunit (520 aa).

S-adenosyl-L-methionine is bound by residues 198-203 (EFFTPQ), 230-232 (SGS), and glutamate 254.

The protein belongs to the N(4)/N(6)-methyltransferase family. As to quaternary structure, the type I restriction/modification system is composed of three polypeptides R, M and S; the restriction enzyme has stoichiometry R(2)M(2)S(1) while the methyltransferase is M(2)S(1).

The catalysed reaction is a 2'-deoxyadenosine in DNA + S-adenosyl-L-methionine = an N(6)-methyl-2'-deoxyadenosine in DNA + S-adenosyl-L-homocysteine + H(+). Functionally, the subtype gamma methyltransferase (M) subunit of a type I restriction enzyme. The M and S subunits together form a methyltransferase (MTase) that methylates two adenine residues of the sequence 5'-CCAN(7)ATGC-3'. In the presence of the R subunit the complex can also act as an endonuclease, binding to the same target sequence but cutting the DNA some distance from this site. Whether the DNA is cut or modified depends on the methylation state of the target sequence. When the target site is unmodified, the DNA is cut. When the target site is hemimethylated, the complex acts as a maintenance MTase modifying the DNA so that both strands become methylated. After locating a non-methylated recognition site, the enzyme complex serves as a molecular motor that translocates DNA in an ATP-dependent manner until a collision occurs that triggers cleavage. The sequence is that of Type I restriction enzyme EcoprrI methylase subunit from Escherichia coli.